We begin with the raw amino-acid sequence, 198 residues long: ATP-dependent Clp protease proteolytic subunit (198 aa).

The Nucleophile role is filled by S98. H123 is a catalytic residue.

Belongs to the peptidase S14 family. Fourteen ClpP subunits assemble into 2 heptameric rings which stack back to back to give a disk-like structure with a central cavity, resembling the structure of eukaryotic proteasomes.

It localises to the cytoplasm. It catalyses the reaction Hydrolysis of proteins to small peptides in the presence of ATP and magnesium. alpha-casein is the usual test substrate. In the absence of ATP, only oligopeptides shorter than five residues are hydrolyzed (such as succinyl-Leu-Tyr-|-NHMec, and Leu-Tyr-Leu-|-Tyr-Trp, in which cleavage of the -Tyr-|-Leu- and -Tyr-|-Trp bonds also occurs).. Functionally, cleaves peptides in various proteins in a process that requires ATP hydrolysis. Has a chymotrypsin-like activity. Plays a major role in the degradation of misfolded proteins. The sequence is that of ATP-dependent Clp protease proteolytic subunit from Ehrlichia ruminantium (strain Gardel).